The following is a 234-amino-acid chain: ATP-dependent dethiobiotin synthetase BioD (234 aa).

Residue 12–17 (DVGKTF) coordinates ATP. T16 contacts Mg(2+). K37 is an active-site residue. T41 serves as a coordination point for substrate. ATP-binding positions include D54 and 115–118 (EGAG). Mg(2+) is bound by residues D54 and E115.

It belongs to the dethiobiotin synthetase family. As to quaternary structure, homodimer. Requires Mg(2+) as cofactor.

The protein resides in the cytoplasm. The enzyme catalyses (7R,8S)-7,8-diammoniononanoate + CO2 + ATP = (4R,5S)-dethiobiotin + ADP + phosphate + 3 H(+). The protein operates within cofactor biosynthesis; biotin biosynthesis; biotin from 7,8-diaminononanoate: step 1/2. In terms of biological role, catalyzes a mechanistically unusual reaction, the ATP-dependent insertion of CO2 between the N7 and N8 nitrogen atoms of 7,8-diaminopelargonic acid (DAPA, also called 7,8-diammoniononanoate) to form a ureido ring. This chain is ATP-dependent dethiobiotin synthetase BioD, found in Lysinibacillus sphaericus (Bacillus sphaericus).